The primary structure comprises 571 residues: Kelch-like protein 28 (571 aa).

A BTB domain is found at 35–102; the sequence is CDIILRVGDV…AYTGTVFISQ (68 aa). 6 Kelch repeats span residues 284 to 331, 332 to 386, 387 to 433, 435 to 479, 480 to 526, and 528 to 570; these read VLCA…VLDQ, KVYV…VLAG, ELYA…VLDG, IYAI…VMLG, FIFV…VIDN, and LYVV…GLTA.

The polypeptide is Kelch-like protein 28 (KLHL28) (Homo sapiens (Human)).